We begin with the raw amino-acid sequence, 76 residues long: UPF0346 protein OEOE_1017 (76 aa).

It belongs to the UPF0346 family.

This chain is UPF0346 protein OEOE_1017, found in Oenococcus oeni (strain ATCC BAA-331 / PSU-1).